Reading from the N-terminus, the 630-residue chain is Subtilisin-like protease 1 (630 aa).

The first 25 residues, 1–25, serve as a signal peptide directing secretion; the sequence is MVLTRRAALLLCPWVIQLVIKRTLA. Residues 26–202 constitute a propeptide, inhibition peptide; that stretch reads GDILPNEGKK…IESDKLVGAD (177 aa). The tract at residues 72–125 is disordered; that stretch reads NAYNPDRDAPKEELQKLQDQQETPSKQPNNLRNSPQKRAEKKESPGKNKKSLRL. The segment covering 76 to 87 has biased composition (basic and acidic residues); the sequence is PDRDAPKEELQK. A compositionally biased stretch (polar residues) spans 94-107; sequence TPSKQPNNLRNSPQ. The segment covering 108 to 117 has biased composition (basic and acidic residues); it reads KRAEKKESPG. The Ca(2+) site is built by Glu129, Asn130, Thr133, Pro135, and Gly190. A disordered region spans residues 230 to 254; sequence LEVPSGESPPSHAASSGSPFDDDDD. The span at 233–248 shows a compositional bias: low complexity; the sequence is PSGESPPSHAASSGSP. Asp281 contributes to the Ca(2+) binding site. In terms of domain architecture, Peptidase S8 spans 287-604; that stretch reads QWGLDLARLD…GGYVDILRAV (318 aa). Disulfide bonds link Cys313/Cys423, Cys402/Cys419, and Cys465/Cys478. The active-site Charge relay system is the Asp316. Asp325, Glu336, Arg340, Val343, Asp344, Asp345, Asp346, Asn348, Val350, Asp352, and Asp353 together coordinate Ca(2+). His372 functions as the Charge relay system in the catalytic mechanism. Positions 383, 386, 388, and 390 each coordinate Ca(2+). Residue Asn546 is glycosylated (N-linked (GlcNAc...) asparagine). Ser549 serves as the catalytic Charge relay system.

The protein belongs to the peptidase S8 family. Heterodimer between p54 form and prodomain p31; the interaction inhibits p54 catalytic activity. Heterodimer p31-p54 is monomeric at basic pH and dimeric at acidic pH; dimerization is driven by the N-terminal prodomain (p31). Ca(2+) serves as cofactor. The prodomain (p31) is cleaved, probably by autocatalysis, and remains non-covalently associated with the p54 form as an inhibitor. p54 is further cleaved into the p45/p47 forms. In terms of processing, the relevance of the N-glycosylation is not clear. In an insect expression system, SUB1 glycosylation appears to affect its processing into the active mature form suggesting that SUB1 may not be N-glycosylated in parasites.

It is found in the secreted. Its subcellular location is the parasitophorous vacuole lumen. The enzyme catalyses Hydrolysis of proteins with broad specificity for peptide bonds, and a preference for a large uncharged residue in P1. Hydrolyzes peptide amides.. Its activity is regulated as follows. Inhibited by peptidic alpha-ketoamide inhibitors. Inhibited by the alpha-ketoamide nonapeptide JMV5126 (isocaproyl-KITAQ(CO)DDEE-NH2). Inhibited by the alpha-ketoamide peptide MAM-117. Its function is as follows. Serine protease which plays an essential role in merozoite invasion of and egress from host erythrocytes by processing and activating various merozoite surface and parasitophorous vacuole proteins. The sequence is that of Subtilisin-like protease 1 from Plasmodium vivax.